Consider the following 726-residue polypeptide: Catalase-peroxidase (726 aa).

The segment at residues 90 to 213 is a cross-link (tryptophyl-tyrosyl-methioninium (Trp-Tyr) (with M-239)); sequence WHAAGTYRIG…LAAVQMGLIY (124 aa). The active-site Proton acceptor is H91. The segment at residues 213–239 is a cross-link (tryptophyl-tyrosyl-methioninium (Tyr-Met) (with W-90)); sequence YVNPEGPNGKPDPAAAARDIRETFARM. H254 contacts heme b. The interval 338–359 is disordered; that stretch reads TPKGGAGAGTVPDAHDPSKRHA.

This sequence belongs to the peroxidase family. Peroxidase/catalase subfamily. In terms of assembly, homodimer or homotetramer. Heme b is required as a cofactor. Formation of the three residue Trp-Tyr-Met cross-link is important for the catalase, but not the peroxidase activity of the enzyme.

The catalysed reaction is H2O2 + AH2 = A + 2 H2O. The enzyme catalyses 2 H2O2 = O2 + 2 H2O. Functionally, bifunctional enzyme with both catalase and broad-spectrum peroxidase activity. This Bradyrhizobium sp. (strain ORS 278) protein is Catalase-peroxidase.